The chain runs to 999 residues: Cytoplasmic dynein 2 intermediate chain 1 (999 aa).

4 stretches are compositionally biased toward basic and acidic residues: residues 1–19 (MEPGKRRTKDDTWKADDLR), 29–138 (PKEE…EEIR), 146–260 (LLSR…EDRH), and 268–300 (GLHYDDERRRSHADKKERSSKEEHKKRELKELE). The segment at 1–350 (MEPGKRRTKD…EHEAREKAEE (350 aa)) is disordered. A Phosphoserine modification is found at Ser250. The segment covering 318–338 (LEDDFVDYEDDFEVCDGDDDS) has biased composition (acidic residues). Positions 339–350 (NNEHEAREKAEE) are enriched in basic and acidic residues. The segment at 416-495 (ASHRQKSRSQ…DIQTEDIETR (80 aa)) is binding to the DYNLT2B-DYNLT1/DYNLT3 dimer. WD repeat units lie at residues 637–677 (ICES…RIHH), 718–764 (AYKK…KADI), 850–890 (VRPI…PIMQ), and 895–935 (TSGH…LGPV).

This sequence belongs to the dynein light intermediate chain family. Intermediate chain of the cytoplasmic dynein complex 2, a multisubunit complex, composed at least of eleven different proteins. The cytoplasmic dynein 2 complex consists of two catalytic heavy chains (HCs) and a number of non-catalytic subunits presented by intermediate chains (ICs), light intermediate chains (LICs) and light chains (LCs). Among them, a heavy chain (DYNC2H1), two intermediate chains (DYNC2I2 and DYNC2I1), a light intermediate chain (DYNC2LI1), and a light chain (DYNLT2B) are unique to the cytoplasmic dynein complex 2, but a subset of the light chains are also shared by dynein-1 and dynein-2 complexes. Interacts with DYNC2I2; their C-terminal domains each bind a copy of the heavy chain, and their extended N-terminal regions are held together by an array of light chain dimers. Interacts with DYNLT2B. Interacts (via the N-terminal half) with DYNLT2B-DYNLT1 dimer or with DYNLT2B-DYNLT3 dimer; this interaction is crucial for retrograde trafficking of ciliary proteins.

It localises to the cell projection. It is found in the cilium. The protein resides in the cytoplasm. Its subcellular location is the cytoskeleton. The protein localises to the microtubule organizing center. It localises to the centrosome. In terms of biological role, acts as one of several non-catalytic accessory components of the cytoplasmic dynein 2 complex (dynein-2 complex), a motor protein complex that drives the movement of cargos along microtubules within cilia and flagella in concert with the intraflagellar transport (IFT) system. DYNC2I1 plays a major role in retrograde ciliary protein trafficking in cilia and flagella. Also requires to maintain a functional transition zone. The sequence is that of Cytoplasmic dynein 2 intermediate chain 1 (Dync2i1) from Mus musculus (Mouse).